Reading from the N-terminus, the 325-residue chain is Tetraacyldisaccharide 4'-kinase (325 aa).

53–60 contacts ATP; that stretch reads SVGGNGKT.

It belongs to the LpxK family.

It catalyses the reaction a lipid A disaccharide + ATP = a lipid IVA + ADP + H(+). Its pathway is glycolipid biosynthesis; lipid IV(A) biosynthesis; lipid IV(A) from (3R)-3-hydroxytetradecanoyl-[acyl-carrier-protein] and UDP-N-acetyl-alpha-D-glucosamine: step 6/6. Transfers the gamma-phosphate of ATP to the 4'-position of a tetraacyldisaccharide 1-phosphate intermediate (termed DS-1-P) to form tetraacyldisaccharide 1,4'-bis-phosphate (lipid IVA). This is Tetraacyldisaccharide 4'-kinase from Mannheimia succiniciproducens (strain KCTC 0769BP / MBEL55E).